The chain runs to 455 residues: Inactive peptidyl-prolyl cis-trans isomerase shutdown (455 aa).

The tract at residues 34 to 54 is disordered; that stretch reads SQQNHARDLGLDSDSDSDYED. A compositionally biased stretch (acidic residues) spans 44 to 54; that stretch reads LDSDSDSDYED. The 90-residue stretch at 103–192 folds into the PPIase FKBP-type domain; the sequence is KARVSVRYSG…LFKVEVIDYS (90 aa). TPR repeat units follow at residues 218 to 251 and 303 to 336; these read AVDLHLHGKDSVKLGRYQSAATAFERAVSSLNYC and CKALFQEGRALAALGEYNLARNAYLQAQAKQPAN.

Belongs to the FKBP6 family. In terms of assembly, interacts with Hsp83. As to expression, strongly expressed in the germline stem cells and in 16-cell cysts. Present in the germ cells throughout embryogenesis. Defects are due to derepression of transposable elements and impaired piRNA biogenesis.

It is found in the cytoplasm. The protein localises to the cytoplasmic ribonucleoprotein granule. Functionally, co-chaperone required during oogenesis to repress transposable elements and prevent their mobilization, which is essential for the germline integrity. Acts via the piRNA metabolic process, which mediates the repression of transposable elements during meiosis by forming complexes composed of piRNAs and Piwi proteins and govern the methylation and subsequent repression of transposons. Acts as a co-chaperone via its interaction with Hsp83/HSP90 and is required for the biogenesis of all three piRNA major populations. This chain is Inactive peptidyl-prolyl cis-trans isomerase shutdown, found in Drosophila melanogaster (Fruit fly).